The following is a 69-amino-acid chain: Putative membrane protein insertion efficiency factor (69 aa).

Belongs to the UPF0161 family.

The protein localises to the cell inner membrane. In terms of biological role, could be involved in insertion of integral membrane proteins into the membrane. This is Putative membrane protein insertion efficiency factor from Syntrophotalea carbinolica (strain DSM 2380 / NBRC 103641 / GraBd1) (Pelobacter carbinolicus).